Here is a 420-residue protein sequence, read N- to C-terminus: Gamma-glutamyl phosphate reductase (420 aa).

The protein belongs to the gamma-glutamyl phosphate reductase family.

The protein localises to the cytoplasm. The enzyme catalyses L-glutamate 5-semialdehyde + phosphate + NADP(+) = L-glutamyl 5-phosphate + NADPH + H(+). It functions in the pathway amino-acid biosynthesis; L-proline biosynthesis; L-glutamate 5-semialdehyde from L-glutamate: step 2/2. Catalyzes the NADPH-dependent reduction of L-glutamate 5-phosphate into L-glutamate 5-semialdehyde and phosphate. The product spontaneously undergoes cyclization to form 1-pyrroline-5-carboxylate. This chain is Gamma-glutamyl phosphate reductase, found in Streptococcus pneumoniae (strain ATCC 700669 / Spain 23F-1).